Consider the following 137-residue polypeptide: Peptide methionine sulfoxide reductase MsrB (137 aa).

Positions 7 to 129 (PTENIEKLSD…NSASLNFVDD (123 aa)) constitute a MsrB domain. Positions 46, 49, 95, and 98 each coordinate Zn(2+). Catalysis depends on C118, which acts as the Nucleophile.

This sequence belongs to the MsrB Met sulfoxide reductase family. Zn(2+) is required as a cofactor.

The enzyme catalyses L-methionyl-[protein] + [thioredoxin]-disulfide + H2O = L-methionyl-(R)-S-oxide-[protein] + [thioredoxin]-dithiol. This chain is Peptide methionine sulfoxide reductase MsrB, found in Yersinia pseudotuberculosis serotype O:1b (strain IP 31758).